A 100-amino-acid chain; its full sequence is Small ribosomal subunit protein uS14 (100 aa).

The protein belongs to the universal ribosomal protein uS14 family. As to quaternary structure, part of the 30S ribosomal subunit. Contacts proteins S3 and S10.

Its function is as follows. Binds 16S rRNA, required for the assembly of 30S particles and may also be responsible for determining the conformation of the 16S rRNA at the A site. This chain is Small ribosomal subunit protein uS14, found in Prochlorococcus marinus (strain AS9601).